A 473-amino-acid polypeptide reads, in one-letter code: Aspartyl/glutamyl-tRNA(Asn/Gln) amidotransferase subunit B (473 aa).

The protein belongs to the GatB/GatE family. GatB subfamily. As to quaternary structure, heterotrimer of A, B and C subunits.

It carries out the reaction L-glutamyl-tRNA(Gln) + L-glutamine + ATP + H2O = L-glutaminyl-tRNA(Gln) + L-glutamate + ADP + phosphate + H(+). The catalysed reaction is L-aspartyl-tRNA(Asn) + L-glutamine + ATP + H2O = L-asparaginyl-tRNA(Asn) + L-glutamate + ADP + phosphate + 2 H(+). Allows the formation of correctly charged Asn-tRNA(Asn) or Gln-tRNA(Gln) through the transamidation of misacylated Asp-tRNA(Asn) or Glu-tRNA(Gln) in organisms which lack either or both of asparaginyl-tRNA or glutaminyl-tRNA synthetases. The reaction takes place in the presence of glutamine and ATP through an activated phospho-Asp-tRNA(Asn) or phospho-Glu-tRNA(Gln). The protein is Aspartyl/glutamyl-tRNA(Asn/Gln) amidotransferase subunit B of Francisella tularensis subsp. novicida (strain U112).